The chain runs to 445 residues: Arabinooligosaccharide-binding protein (445 aa).

An N-terminal signal peptide occupies residues 1 to 20 (MGKNILFFSFVGVMVLVLVA). Cys21 is lipidated: N-palmitoyl cysteine. A lipid anchor (S-diacylglycerol cysteine) is attached at Cys21.

The protein belongs to the bacterial solute-binding protein 1 family. The complex is composed of two ATP-binding proteins (MsmX), two transmembrane proteins (AraP and AraQ) and a solute-binding protein (AraN).

It localises to the cell membrane. Part of the ABC transporter complex AraNPQ involved in the uptake of arabinooligosaccharides. AraN captures the substrate and delivers it to the two transmembrane components. The polypeptide is Arabinooligosaccharide-binding protein (araN) (Halalkalibacterium halodurans (strain ATCC BAA-125 / DSM 18197 / FERM 7344 / JCM 9153 / C-125) (Bacillus halodurans)).